A 259-amino-acid chain; its full sequence is Ribosomal RNA small subunit methyltransferase A (259 aa).

S-adenosyl-L-methionine is bound by residues asparagine 13, threonine 15, glycine 40, glutamate 61, aspartate 85, and asparagine 105.

It belongs to the class I-like SAM-binding methyltransferase superfamily. rRNA adenine N(6)-methyltransferase family. RsmA subfamily.

The protein localises to the cytoplasm. The enzyme catalyses adenosine(1518)/adenosine(1519) in 16S rRNA + 4 S-adenosyl-L-methionine = N(6)-dimethyladenosine(1518)/N(6)-dimethyladenosine(1519) in 16S rRNA + 4 S-adenosyl-L-homocysteine + 4 H(+). Its function is as follows. Specifically dimethylates two adjacent adenosines (A1518 and A1519) in the loop of a conserved hairpin near the 3'-end of 16S rRNA in the 30S particle. May play a critical role in biogenesis of 30S subunits. The polypeptide is Ribosomal RNA small subunit methyltransferase A (Mycoplasma genitalium (strain ATCC 33530 / DSM 19775 / NCTC 10195 / G37) (Mycoplasmoides genitalium)).